Consider the following 539-residue polypeptide: MKITIKPKLAMAGLALAIGMLNAQAAETRKVDVLLVGGGIMSSTLAVWLNELEPGWSMEMVERLDKVAEESSNGWNNAGTGHSALAELNYTPEKDGKIDISKAVEINESFQVTRQFLAWQVKQGVLKNPHSFINTTPHMSFVWGDDNIRFLKKRYEALQASPLFKPMQYSEDHEQIRKWVPLMMEGRDPNQKLAVTWTPIGTDVNFGEITRQYVGYLQTRPNFDLKLSSEVQDITRNDDGSWHVEYKNLKNGSKAATDARFLFIGAGGAALPLLQKSGIDEAKNYGGFPVGGSFLVTDNPAIAQRHMAKAYGIAATGAPPMSVPHLDTRVLDGKRLILFGPFATFSTKFLKQGSLLDLLASTSVHNAWPMVRVGVREFDLVQYLIGQVLQSDDDRFEALRTYFPEAKKEDWRLWQAGQRVQIIKKDEALGGVLKLGTEVVTSRDGSIAGLLGASPGASTAAPIMLDVLNKVFKNKVASPEWQAKIKQIIPSYGIRLNDHPDQLEKEWAYTNEVLQLEPPVSPQRPESIRPADSQGVASR.

The interval 516-539 (LEPPVSPQRPESIRPADSQGVASR) is disordered.

Belongs to the MQO family. FAD serves as cofactor.

It catalyses the reaction (S)-malate + a quinone = a quinol + oxaloacetate. The protein operates within carbohydrate metabolism; tricarboxylic acid cycle; oxaloacetate from (S)-malate (quinone route): step 1/1. The sequence is that of Probable malate:quinone oxidoreductase 3 from Pseudomonas putida (strain ATCC 47054 / DSM 6125 / CFBP 8728 / NCIMB 11950 / KT2440).